The chain runs to 445 residues: Histone acetyltransferase ESA1 (445 aa).

Serine 17 carries the phosphoserine modification. The Tudor-knot domain maps to 22–74; sequence IIKCQCWVQKNDEERLAEILSINTRKAPPKFYVHYVNYNKRLDEWITTDRINL. The interval 88–114 is disordered; it reads EDNKKQKKKKATNTSETPQDSLQDGVD. Over residues 99-109 the composition is skewed to polar residues; that stretch reads TNTSETPQDSL. Positions 162 to 433 constitute an MYST-type HAT domain; the sequence is ARVRNLNRII…IDPNRLIWKP (272 aa). Residues 195–220 form a C2HC MYST-type; degenerate zinc finger; sequence IYIDDFTLQYFGSKKQYERYRKKCTL. Positions 245–266 match the ESA1-RPD3 motif motif; it reads RTWCRNLCLLSKLFLDHKTLYY. The residue at position 262 (lysine 262) is an N6-acetyllysine; by autocatalysis. Acetyl-CoA is bound by residues 303–307 and 312–318; these read ACILT and QRMGYGK. The Proton donor/acceptor role is filled by glutamate 338. Residue serine 342 coordinates acetyl-CoA.

It belongs to the MYST (SAS/MOZ) family. Component of the NuA4 histone acetyltransferase complex composed of at least ACT1, ARP4, EAF3, EAF5, EAF6, EAF7, EPL1, ESA1, SWC4, TRA1, VID21, YAF9 and YNG2. The complex interacts with histones H4 (HHF1 and HHF2), H3 (HHT1 and HHT2) and H2A (HTA1 and HTA2). Post-translationally, autoacetylation at Lys-262 is required for proper function.

It carries out the reaction L-lysyl-[histone] + acetyl-CoA = N(6)-acetyl-L-lysyl-[histone] + CoA + H(+). The enzyme catalyses L-lysyl-[protein] + acetyl-CoA = N(6)-acetyl-L-lysyl-[protein] + CoA + H(+). The catalysed reaction is 2-hydroxyisobutanoyl-CoA + L-lysyl-[protein] = N(6)-(2-hydroxyisobutanoyl)-L-lysyl-[protein] + CoA + H(+). It catalyses the reaction (2E)-butenoyl-CoA + L-lysyl-[protein] = N(6)-(2E)-butenoyl-L-lysyl-[protein] + CoA + H(+). Functionally, catalytic component of the NuA4 histone acetyltransferase (HAT), a multiprotein complex involved in epigenetic transcriptional activation of selected genes principally by acetylation of nucleosomal histones H4, H3, H2B, H2A and H2A variant H2A.Z. Acetylates histone H4 to form H4K5ac, H4K8ac, H4K12ac and H4K16ac, histone H3 to form H3K14ac, histone H2B to form H2BK16ac, histone H2A to form H2AK4ac and H2AK7ac, and histone variant H2A.Z to form H2A.ZK14ac. Acetylation of histones gives a specific tag for epigenetic transcription initiation and elongation. Acetylation of histone H4 is essential for DNA double-strand break repair through homologous recombination. Involved in cell cycle progression. Recruitment to promoters depends on H3K4me. Also acetylates non-histone proteins, such as ATG3 and PAH1. Regulates autophagy by acetylating ATG3, controlling interaction the interaction between ATG3 and ATG8 and ATG8 lipidation. Acts as a regulator of fatty-acid-induced triacylglycerol synthesis by catalyzing acetylation of PAH1, thereby promoting the synthesis of diacylglycerol. In addition to protein acetyltransferase, can use different acyl-CoA substrates, such as 2-hydroxyisobutanoyl-CoA (2-hydroxyisobutyryl-CoA) or (2E)-butenoyl-CoA (crotonyl-CoA), and is able to mediate protein 2-hydroxyisobutyrylation and crotonylation, respectively. Catalyzes histone crotonylation. This is Histone acetyltransferase ESA1 from Saccharomyces cerevisiae (strain ATCC 204508 / S288c) (Baker's yeast).